We begin with the raw amino-acid sequence, 336 residues long: DNA polymerase III subunit delta' (336 aa).

As to quaternary structure, DNA polymerase III contains a core (composed of alpha, epsilon and theta chains) that associates with a tau subunit. This core dimerizes to form the POLIII' complex. PolIII' associates with the gamma complex (composed of gamma, delta, delta', psi and chi chains) and with the beta chain to form the complete DNA polymerase III complex.

It catalyses the reaction DNA(n) + a 2'-deoxyribonucleoside 5'-triphosphate = DNA(n+1) + diphosphate. Functionally, DNA polymerase III is a complex, multichain enzyme responsible for most of the replicative synthesis in bacteria. This DNA polymerase also exhibits 3' to 5' exonuclease activity. The protein is DNA polymerase III subunit delta' (holB) of Buchnera aphidicola subsp. Baizongia pistaciae (strain Bp).